Consider the following 294-residue polypeptide: MSVKQLGYLIFECRADVLEQMVVVYQDIIGAVVERDEGGRALVRLDGRPFRIRLDPGPANRLAAIGWNVDPSDLAAIAEQVEKACYSVVTADAELAADRAAAQVRQFADNDGFTHELYVESSFPTDPVLESLFVCGEEANGIFGLGHLVVIVADRAKTQSFFTDVLGFGLSDRVTWPEADIFFLHCNQRHHTVALSAPALGLKPGMVHHLMLEAKSKEQVDRAFAAVKRLGYDVLMTIGQHSNDKVYSFYMMAPAGFAVELGFGGQVIGDLESWHVGFYDAPSIWGHELQLPAH.

VOC domains follow at residues 7 to 120 (GYLI…LYVE) and 144 to 264 (GLGH…LGFG). Fe cation is bound by residues histidine 147, histidine 209, and glutamate 260.

It belongs to the extradiol ring-cleavage dioxygenase family. Monomer. Fe(2+) is required as a cofactor.

Its pathway is xenobiotic degradation; dibenzo-p-dioxin degradation; 2-hydroxymuconate and catechol from dibenzo-p-dioxin: step 2/3. It participates in xenobiotic degradation; dibenzofuran degradation; 2-hydroxy-2,4-pentadienoate and salicylate from dibenzofuran: step 2/3. In terms of biological role, responsible for meta-cleavage of the first aromatic ring of 2,2',3-trihydroxybiphenyl and 2,3-dihydroxybiphenyl. 2,2',3-trihydroxydiphenyl ether, catechol, 3-methylcatechol, and 4-methylcatechol are oxidized less efficiently and 3,4-dihydroxybiphenyl is oxidized considerably less efficiently. In Sphingomonas paucimobilis (Pseudomonas paucimobilis), this protein is 2,2',3-trihydroxybiphenyl dioxygenase (dbfB).